The chain runs to 329 residues: G-protein coupled receptor 3 (329 aa).

Residues 1 to 43 are Extracellular-facing; the sequence is MMWGAGRSMAWFSAGSGSVNVSIDPAEEPTGPATLLPSPRAWD. Residue Asn-20 is glycosylated (N-linked (GlcNAc...) asparagine). The chain crosses the membrane as a helical span at residues 44-64; it reads VVLCISGTLVSCENALVVAII. The Cytoplasmic segment spans residues 65–73; it reads VGTPAFRAP. A helical transmembrane segment spans residues 74–94; that stretch reads MFLLVGSLAVADLLAGLGLVL. Topologically, residues 95 to 108 are extracellular; the sequence is HFAADFCIGSPEMS. Residues 109–129 form a helical membrane-spanning segment; the sequence is LVLVGVLATAFTASIGSLLAI. The Cytoplasmic portion of the chain corresponds to 130-153; sequence TVDRYLSLYNALTYYSETTVTRTY. A helical membrane pass occupies residues 154–174; it reads VMLALVWVGALGLGLVPVLAW. Over 175–192 the chain is Extracellular; it reads NCRDGLTTCGVVYPLSKN. The helical transmembrane segment at 193 to 213 threads the bilayer; sequence HLVVLAIVFFMVFGIMLQLYA. Residues 214–247 are Cytoplasmic-facing; sequence QICRIVCRHAQQIALQRHLLPASHYVATRKGIAT. A helical transmembrane segment spans residues 248-268; that stretch reads LAVVLGAFAACWLPFTVYCLL. At 269 to 277 the chain is on the extracellular side; it reads GDANSPPLY. Residues 278-298 form a helical membrane-spanning segment; that stretch reads TYLTLLPATYNSMINPVIYAF. At 299-329 the chain is on the cytoplasmic side; it reads RNQDVQKVLWAICCCCSTSKIPFRSRSPSDV. Cys-312 carries S-palmitoyl cysteine lipidation. Phosphoserine occurs at positions 323, 325, and 327.

Belongs to the G-protein coupled receptor 1 family. Abundantly expressed in granule neurons at all development stages. Enriched in the longest tips of neurites during differentiation of hippocampal neurons.

The protein resides in the cell membrane. Its function is as follows. Constitutively active G-protein coupled receptor that maintains high 3'-5'-cyclic adenosine monophosphate (cAMP) levels that a plays a role in serveral processes including meiotic arrest in oocytes or neuronal development via activation of numerous intracellular signaling pathways. Acts as an essential activator of thermogenic adipocytes and drives thermogenesis via its intrinsic G(s)-coupling activity without the requirement of a ligand. Has a potential role in modulating a number of brain functions, including behavioral responses to stress, amyloid-beta peptide generation in neurons. Stimulates neurite outgrowth in cerebellar granular neurons modulated via PKA, ERK, and most strongly PI3K-mediated signaling pathways. The sequence is that of G-protein coupled receptor 3 (Gpr3) from Rattus norvegicus (Rat).